The sequence spans 189 residues: Elongation factor P (189 aa).

This sequence belongs to the elongation factor P family.

The protein resides in the cytoplasm. It participates in protein biosynthesis; polypeptide chain elongation. Involved in peptide bond synthesis. Stimulates efficient translation and peptide-bond synthesis on native or reconstituted 70S ribosomes in vitro. Probably functions indirectly by altering the affinity of the ribosome for aminoacyl-tRNA, thus increasing their reactivity as acceptors for peptidyl transferase. The sequence is that of Elongation factor P from Rhizobium etli (strain ATCC 51251 / DSM 11541 / JCM 21823 / NBRC 15573 / CFN 42).